The sequence spans 491 residues: (R)-citramalate synthase CimA (491 aa).

The Pyruvate carboxyltransferase domain maps to 3–254 (VRIFDTTLRD…DTKIKMEKLY (252 aa)).

It belongs to the alpha-IPM synthase/homocitrate synthase family. As to quaternary structure, homodimer.

The enzyme catalyses pyruvate + acetyl-CoA + H2O = (3R)-citramalate + CoA + H(+). The protein operates within amino-acid biosynthesis; L-isoleucine biosynthesis; 2-oxobutanoate from pyruvate: step 1/3. Catalyzes the condensation of pyruvate and acetyl-coenzyme A to form (R)-citramalate. This Methanocaldococcus jannaschii (strain ATCC 43067 / DSM 2661 / JAL-1 / JCM 10045 / NBRC 100440) (Methanococcus jannaschii) protein is (R)-citramalate synthase CimA (cimA).